Here is a 584-residue protein sequence, read N- to C-terminus: MSVNDWAFLVLIGVILALLLIPTGEFMFRVYTGKKTFLSPLFVPVEAWILKACGAGSDEEMDWKSFAVAMMIFSVIGIVFVFILQEVQQFLPLNPLGATAVPWDLSLNTAVSFATNTNWQFYVPETTVSYLTQMIGLTVQNFMSAAVGMVVLVAFIYGFSRRSSHTIGNFWVLLLRSIWILLPLSFVIALVLVSQGAPQTLSGPVTVPLLNATNDSGGNIITTQLISLGPAASQIAVKMLGTNGGGFFNANSAHPFENPTWFTDLVEIVAILLIPVSLCFMFGKMIGSVKKGIAILIAMMILFVPLLGLGIWSEIGGNPAFTPLGISQAPSHLQSGGNMEGKEVRFGPVQSAAFSVITTVTSCGAVNSMHDSFMPLGGLVQIFDIQLGEIVFGGVGSGLYCMLVFVIIAMFIAGLMVGRTPELYGKKIEPYEMKLSTIHILIPIFLILIGTAIAVSITAGTSMTANPGPHGFSEILYAFSSVSQNNGSAFAGLSSDTFYNLTTAFCMFVGRYAIAIITLALAGAFVAKKIVPPGEGTLQDHRPLFIIWVVFTILIIGALSFLPALSLGPVVEFLIQMGRGVIHV.

Transmembrane regions (helical) follow at residues Phe-8 to Phe-28, Ser-65 to Gln-85, Val-139 to Phe-159, Val-172 to Leu-192, Phe-262 to Phe-282, Gly-292 to Trp-312, Gly-398 to Gly-418, Ile-440 to Gly-460, Met-507 to Ala-527, and Leu-544 to Ala-564.

The protein belongs to the KdpA family. As to quaternary structure, the system is composed of three essential subunits: KdpA, KdpB and KdpC.

The protein resides in the cell membrane. Part of the high-affinity ATP-driven potassium transport (or Kdp) system, which catalyzes the hydrolysis of ATP coupled with the electrogenic transport of potassium into the cytoplasm. This subunit binds the extracellular potassium ions and delivers the ions to the membrane domain of KdpB through an intramembrane tunnel. The polypeptide is Potassium-transporting ATPase potassium-binding subunit (Methanoregula boonei (strain DSM 21154 / JCM 14090 / 6A8)).